A 431-amino-acid polypeptide reads, in one-letter code: Adenylosuccinate synthetase (431 aa).

Residues 12 to 18 and 40 to 42 each bind GTP; these read GDEGKGK and GHT. Aspartate 13 functions as the Proton acceptor in the catalytic mechanism. Aspartate 13 and glycine 40 together coordinate Mg(2+). IMP-binding positions include 13-16, 38-41, threonine 131, arginine 145, glutamine 225, threonine 240, and arginine 304; these read DEGK and NAGH. The Proton donor role is filled by histidine 41. 300–306 serves as a coordination point for substrate; the sequence is TVTGRKR. Residues arginine 306, 332 to 334, and 414 to 416 each bind GTP; these read KLD and STS.

It belongs to the adenylosuccinate synthetase family. As to quaternary structure, homodimer. Requires Mg(2+) as cofactor.

It is found in the cytoplasm. The enzyme catalyses IMP + L-aspartate + GTP = N(6)-(1,2-dicarboxyethyl)-AMP + GDP + phosphate + 2 H(+). It functions in the pathway purine metabolism; AMP biosynthesis via de novo pathway; AMP from IMP: step 1/2. Plays an important role in the de novo pathway of purine nucleotide biosynthesis. Catalyzes the first committed step in the biosynthesis of AMP from IMP. This Roseobacter denitrificans (strain ATCC 33942 / OCh 114) (Erythrobacter sp. (strain OCh 114)) protein is Adenylosuccinate synthetase.